The chain runs to 337 residues: WRKY transcription factor 23 (337 aa).

Residues 100-160 (INPPATPNSS…KNNQKRQREA (61 aa)) form a disordered region. Residues 106-118 (PNSSSISSASSEA) are compositionally biased toward low complexity. Residues 142–155 (HTKKQLKAKKNNQK) show a composition bias toward basic residues. A DNA-binding region (WRKY) is located at residues 168-233 (SEVDHLEDGY…YEGQHTHISP (66 aa)).

The protein belongs to the WRKY group II-c family.

The protein resides in the nucleus. Functionally, transcription factor. Interacts specifically with the W box (5'-(T)TGAC[CT]-3'), a frequently occurring elicitor-responsive cis-acting element. In Arabidopsis thaliana (Mouse-ear cress), this protein is WRKY transcription factor 23 (WRKY23).